A 364-amino-acid chain; its full sequence is UDP-N-acetylglucosamine--N-acetylmuramyl-(pentapeptide) pyrophosphoryl-undecaprenol N-acetylglucosamine transferase (364 aa).

UDP-N-acetyl-alpha-D-glucosamine-binding positions include 10–12, asparagine 124, arginine 166, serine 196, and glutamine 297; that span reads TGG.

This sequence belongs to the glycosyltransferase 28 family. MurG subfamily.

It localises to the cell membrane. It carries out the reaction di-trans,octa-cis-undecaprenyl diphospho-N-acetyl-alpha-D-muramoyl-L-alanyl-D-glutamyl-meso-2,6-diaminopimeloyl-D-alanyl-D-alanine + UDP-N-acetyl-alpha-D-glucosamine = di-trans,octa-cis-undecaprenyl diphospho-[N-acetyl-alpha-D-glucosaminyl-(1-&gt;4)]-N-acetyl-alpha-D-muramoyl-L-alanyl-D-glutamyl-meso-2,6-diaminopimeloyl-D-alanyl-D-alanine + UDP + H(+). Its pathway is cell wall biogenesis; peptidoglycan biosynthesis. In terms of biological role, cell wall formation. Catalyzes the transfer of a GlcNAc subunit on undecaprenyl-pyrophosphoryl-MurNAc-pentapeptide (lipid intermediate I) to form undecaprenyl-pyrophosphoryl-MurNAc-(pentapeptide)GlcNAc (lipid intermediate II). In Thermoanaerobacter pseudethanolicus (strain ATCC 33223 / 39E) (Clostridium thermohydrosulfuricum), this protein is UDP-N-acetylglucosamine--N-acetylmuramyl-(pentapeptide) pyrophosphoryl-undecaprenol N-acetylglucosamine transferase.